We begin with the raw amino-acid sequence, 501 residues long: Protein translocase subunit SecD (501 aa).

6 helical membrane passes run 9–29, 339–359, 371–391, 394–414, 447–467, and 470–490; these read NLWL…YAVV, AIEQ…VVLI, ISIF…GATL, PGIA…VLIF, VTLL…VKGF, and TLAL…KVFL.

It belongs to the SecD/SecF family. SecD subfamily. In terms of assembly, forms a complex with SecF. Part of the essential Sec protein translocation apparatus which comprises SecA, SecYEG and auxiliary proteins SecDF. Other proteins may also be involved.

The protein resides in the cell inner membrane. Part of the Sec protein translocase complex. Interacts with the SecYEG preprotein conducting channel. SecDF uses the proton motive force (PMF) to complete protein translocation after the ATP-dependent function of SecA. The polypeptide is Protein translocase subunit SecD (Aquifex aeolicus (strain VF5)).